A 2136-amino-acid polypeptide reads, in one-letter code: MSRSRHARPSRLVRKEDVNKKKKNSQLRKTTKGANKNVASVKTLSPGKLKQLIQERDVKKKTEPKPPVPVRSLLTRAGAARMNLDRTEVLFQNPESLTCNGFTMALRSTSLSRRLSQPPLVVAKSKKVPLSKGLEKQHDCDYKILPALGVKHSENDSVPMQDTQVLPDIETLIGVQNPSLLKGKSQETTQFWSQRVEDSKINIPTHSGPAAEILPGPLEGTRCGEGLFSEETLNDTSGSPKMFAQDTVCAPFPQRATPKVTSQGNPSIQLEELGSRVESLKLSDSYLDPIKSEHDCYPTSSLNKVIPDLNLRNCLALGGSTSPTSVIKFLLAGSKQATLGAKPDHQEAFEATANQQEVSDTTSFLGQAFGAIPHQWELPGADPVHGEALGETPDLPEIPGAIPVQGEVFGTILDQQETLGMSGSVVPDLPVFLPVPPNPIATFNAPSKWPEPQSTVSYGLAVQGAIQILPLGSGHTPQSSSNSEKNSLPPVMAISNVENEKQVHISFLPANTQGFPLAPERGLFHASLGIAQLSQAGPSKSDRGSSQVSVTSTVHVVNTTVVTMPVPMVSTSSSSYTTLLPTLEKKKRKRCGVCEPCQQKTNCGECTYCKNRKNSHQICKKRKCEELKKKPSVVVPLEVIKENKRPQREKKPKVLKADFDNKPVNGPKSESMDYSRCGHGEEQKLELNPHTVENVTKNEDSMTGIEVEKWTQNKKSQLTDHVKGDFSANVPEAEKSKNSEVDKKRTKSPKLFVQTVRNGIKHVHCLPAETNVSFKKFNIEEFGKTLENNSYKFLKDTANHKNAMSSVATDMSCDHLKGRSNVLVFQQPGFNCSSIPHSSHSIINHHASIHNEGDQPKTPENIPSKEPKDGSPVQPSLLSLMKDRRLTLEQVVAIEALTQLSEAPSENSSPSKSEKDEESEQRTASLLNSCKAILYTVRKDLQDPNLQGEPPKLNHCPSLEKQSSCNTVVFNGQTTTLSNSHINSATNQASTKSHEYSKVTNSLSLFIPKSNSSKIDTNKSIAQGIITLDNCSNDLHQLPPRNNEVEYCNQLLDSSKKLDSDDLSCQDATHTQIEEDVATQLTQLASIIKINYIKPEDKKVESTPTSLVTCNVQQKYNQEKGTIQQKPPSSVHNNHGSSLTKQKNPTQKKTKSTPSRDRRKKKPTVVSYQENDRQKWEKLSYMYGTICDIWIASKFQNFGQFCPHDFPTVFGKISSSTKIWKPLAQTRSIMQPKTVFPPLTQIKLQRYPESAEEKVKVEPLDSLSLFHLKTESNGKAFTDKAYNSQVQLTVNANQKAHPLTQPSSPPNQCANVMAGDDQIRFQQVVKEQLMHQRLPTLPGISHETPLPESALTLRNVNVVCSGGITVVSTKSEEEVCSSSFGTSEFSTVDSAQKNFNDYAMNFFTNPTKNLVSITKDSELPTCSCLDRVIQKDKGPYYTHLGAGPSVAAVREIMENRYGQKGNAIRIEIVVYTGKEGKSSHGCPIAKWVLRRSSDEEKVLCLVRQRTGHHCPTAVMVVLIMVWDGIPLPMADRLYTELTENLKSYNGHPTDRRCTLNENRTCTCQGIDPETCGASFSFGCSWSMYFNGCKFGRSPSPRRFRIDPSSPLHEKNLEDNLQSLATRLAPIYKQYAPVAYQNQVEYENVARECRLGSKEGRPFSGVTACLDFCAHPHRDIHNMNNGSTVVCTLTREDNRSLGVIPQDEQLHVLPLYKLSDTDEFGSKEGMEAKIKSGAIEVLAPRRKKRTCFTQPVPRSGKKRAAMMTEVLAHKIRAVEKKPIPRIKRKNNSTTTNNSKPSSLPTLGSNTETVQPEVKSETEPHFILKSSDNTKTYSLMPSAPHPVKEASPGFSWSPKTASATPAPLKNDATASCGFSERSSTPHCTMPSGRLSGANAAAADGPGISQLGEVAPLPTLSAPVMEPLINSEPSTGVTEPLTPHQPNHQPSFLTSPQDLASSPMEEDEQHSEADEPPSDEPLSDDPLSPAEEKLPHIDEYWSDSEHIFLDANIGGVAIAPAHGSVLIECARRELHATTPVEHPNRNHPTRLSLVFYQHKNLNKPQHGFELNKIKFEAKEAKNKKMKASEQKDQAANEGPEQSSEVNELNQIPSHKALTLTHDNVVTVSPYALTHVAGPYNHWV.

Composition is skewed to basic residues over residues 1–12 and 20–31; these read MSRSRHARPSRL and KKKKNSQLRKTT. The tract at residues 1–47 is disordered; sequence MSRSRHARPSRLVRKEDVNKKKKNSQLRKTTKGANKNVASVKTLSPG. Residues 32-43 are compositionally biased toward polar residues; sequence KGANKNVASVKT. A sufficient for binding to genomic CpG islands region spans residues 528-674; sequence LGIAQLSQAG…NGPKSESMDY (147 aa). Residues 584–625 form a CXXC-type zinc finger; the sequence is EKKKRKRCGVCEPCQQKTNCGECTYCKNRKNSHQICKKRKCE. Positions 591, 594, 597, 603, 606, 609, 619, and 624 each coordinate Zn(2+). Basic and acidic residues-rich tracts occupy residues 712–724, 732–743, and 849–869; these read QNKKSQLTDHVKG, EAEKSKNSEVDK, and IHNEGDQPKTPENIPSKEPKD. Disordered stretches follow at residues 712 to 746, 849 to 876, 899 to 923, and 1119 to 1169; these read QNKKSQLTDHVKGDFSANVPEAEKSKNSEVDKKRT, IHNEGDQPKTPENIPSKEPKDGSPVQPS, QLSEAPSENSSPSKSEKDEESEQRT, and EKGT…VSYQ. Ser-871 bears the Phosphoserine mark. The segment covering 901–911 has biased composition (low complexity); it reads SEAPSENSSPS. Over residues 1119-1139 the composition is skewed to polar residues; that stretch reads EKGTIQQKPPSSVHNNHGSSL. The span at 1146–1163 shows a compositional bias: basic residues; that stretch reads TQKKTKSTPSRDRRKKKP. Residues Cys-1422, Cys-1424, Cys-1482, His-1508, and Cys-1510 each coordinate Zn(2+). Arg-1551 lines the 2-oxoglutarate pocket. Residues Cys-1561, Cys-1563, Cys-1579, and Cys-1588 each coordinate Zn(2+). An interaction with DNA region spans residues 1580-1593; that stretch reads SWSMYFNGCKFGRS. Lys-1589 participates in a covalent cross-link: Glycyl lysine isopeptide (Lys-Gly) (interchain with G-Cter in ubiquitin). Cys-1648 is a binding site for Zn(2+). Residue Cys-1664 participates in 2-oxoglutarate binding. Residue His-1670 participates in Zn(2+) binding. Fe cation is bound by residues His-1672 and Asp-1674. Asn-1677 serves as a coordination point for substrate. His-1706 serves as a coordination point for 2-oxoglutarate. Disordered stretches follow at residues 1774–1897 and 1919–1984; these read EKKP…AAAD and EPLI…SPAE. The span at 1786-1800 shows a compositional bias: low complexity; sequence NSTTTNNSKPSSLPT. Polar residues-rich tracts occupy residues 1824–1833 and 1937–1953; these read SSDNTKTYSL and HQPNHQPSFLTSPQDLA. Residues 1957-1976 show a composition bias toward acidic residues; that stretch reads MEEDEQHSEADEPPSDEPLS. A Fe cation-binding site is contributed by His-2028. 2043 to 2045 is a 2-oxoglutarate binding site; the sequence is RLS. 2049–2051 lines the substrate pocket; sequence YQH. His-2059 is a binding site for Zn(2+). Positions 2074–2087 are enriched in basic and acidic residues; that stretch reads KNKKMKASEQKDQA. Positions 2074–2100 are disordered; it reads KNKKMKASEQKDQAANEGPEQSSEVNE.

The protein belongs to the TET family. Interacts with SIN3A; recruits the transcriptional corepressor SIN3A to gene promoters. Interacts with HCFC1. Interacts (via C-terminus) with OGT. Found in a complex composed of at least SINHCAF, SIN3A, HDAC1, SAP30, RBBP4, OGT and TET1. Interacts with QSER1. Interacts with NONO (via DNA-binding domain); this interaction recruits TET1 to genomic loci. Interacts with FOXA2; this interaction may recruit TET1 to specific enhancers to preserve their unmethylated status and hence allowing gene expression. Interacts with RNF2. Directly interacts (via C-terminus) with the DCAF1 component of the CRL4(VprBP) E3 ubiquitin-protein ligase complex. As to quaternary structure, interacts with UHRF1; this interaction induces the recruitment of TET1 to replicating heterochromatin. Interacts with DCAF1. The cofactor is Fe(2+). It depends on Zn(2+) as a cofactor. In terms of processing, glycosylated. Interaction with OGT leads to GlcNAcylation. Monoubiquitinated at Lys-1589 by the DCX (DDB1-CUL4-X-box) E3 ubiquitin-protein ligase complex called CRL4(VprBP) or CUL4A-RBX1-DDB1-DCAF1/VPRBP complex; this modification promotes binding to DNA. In terms of tissue distribution, expressed in fetal heart, lung and brain, and in adult skeletal muscle, thymus and ovary. Not detected in adult heart, lung or brain. Up-regulated in glioblastoma cells (at protein level). Expressed in embryonic stem cells (at protein level).

The protein localises to the nucleus. It localises to the chromosome. The catalysed reaction is a 5-methyl-2'-deoxycytidine in DNA + 2-oxoglutarate + O2 = a 5-hydroxymethyl-2'-deoxycytidine in DNA + succinate + CO2. It carries out the reaction a 5-hydroxymethyl-2'-deoxycytidine in DNA + 2-oxoglutarate + O2 = a 5-formyl-2'-deoxycytidine in DNA + succinate + CO2 + H2O. The enzyme catalyses a 5-formyl-2'-deoxycytidine in DNA + 2-oxoglutarate + O2 = a 5-carboxyl-2'-deoxycytidine in DNA + succinate + CO2 + H(+). Its function is as follows. Dioxygenase that plays a key role in active DNA demethylation, by catalyzing the sequential oxidation of the modified genomic base 5-methylcytosine (5mC) into 5-hydroxymethylcytosine (5hmC), 5-formylcytosine (5fC), and 5-carboxylcytosine (5caC). In addition to its role in DNA demethylation, plays a more general role in chromatin regulation by recruiting histone modifying protein complexes to alter histone marks and chromatin accessibility, leading to both activation and repression of gene expression. Plays therefore a role in many biological processes, including stem cell maintenance, T- and B-cell development, inflammation regulation, genomic imprinting, neural activity or DNA repair. Involved in the balance between pluripotency and lineage commitment of cells and plays a role in embryonic stem cells maintenance and inner cell mass cell specification. Together with QSER1, plays an essential role in the protection and maintenance of transcriptional and developmental programs to inhibit the binding of DNMT3A/3B and therefore de novo methylation. May play a role in pancreatic beta-cell specification during development. In this context, may function as an upstream epigenetic regulator of PAX4 presumably through direct recruitment by FOXA2 to a PAX4 enhancer to preserve its unmethylated status, thereby potentiating PAX4 expression to adopt beta-cell fate during endocrine lineage commitment. Under DNA hypomethylation conditions, such as in female meiotic germ cells, may induce epigenetic reprogramming of pericentromeric heterochromatin (PCH), the constitutive heterochromatin of pericentromeric regions. PCH forms chromocenters in the interphase nucleus and chromocenters cluster at the prophase of meiosis. In this context, may also be essential for chromocenter clustering in a catalytic activity-independent manner, possibly through the recruitment polycomb repressive complex 1 (PRC1) to the chromocenters. During embryonic development, may be required for normal meiotic progression in oocytes and meiotic gene activation. Binds preferentially to DNA containing cytidine-phosphate-guanosine (CpG) dinucleotides over CpH (H=A, T, and C), hemimethylated-CpG and hemimethylated-hydroxymethyl-CpG. Dioxygenase that plays a key role in active DNA demethylation. Binds to promoters, particularly to those with high CG content. In hippocampal neurons, isoform 1 regulates the expression of a unique subset of genes compared to isoform 2, although some overlap exists between both isoforms, hence differentially regulates excitatory synaptic transmission. In hippocampal neuron cell cultures, isoform 1 controls both miniature excitatory postsynaptic current amplitude and frequency. Isoform 1 may regulate genes involved in hippocampal-dependent memory, leading to positive regulation of memory, contrary to isoform 2 that may decrease memory. Functionally, dioxygenase that plays a key role in active DNA demethylation. As isoform 1, binds to promoters, particularly to those with high CG content, however displays reduced global chromatin affinity compared with isoform 1, leading to decreased global DNA demethylation compared with isoform 1. Contrary to isoform 1, isoform 2 localizes during S phase to sites of ongoing DNA replication in heterochromatin, causing a significant de novo 5hmC formation, globally, and more so in heterochromatin, including LINE 1 interspersed DNA repeats leading to their activation. In hippocampal neurons, isoform 2 regulates the expression of a unique subset of genes compared to isoform 1, although some overlap between both isoforms, hence differentially regulates excitatory synaptic transmission. In hippocampal neuron cell cultures, isoform 2 controls miniature excitatory postsynaptic current frequency, but not amplitude. Isoform 2 may regulate genes involved in hippocampal-dependent memory, leading to negative regulation of memory, contrary to isoform 1 that may improve memory. In immature and partially differentiated gonadotrope cells, directly represses luteinizing hormone gene LHB expression and does not catalyze 5hmC at the gene promoter. The polypeptide is Methylcytosine dioxygenase TET1 (Homo sapiens (Human)).